A 329-amino-acid chain; its full sequence is Nicotianamine synthase 8 (329 aa).

It belongs to the nicotianamine synthase (NAS)-like family. Homotrimer.

The catalysed reaction is 3 S-adenosyl-L-methionine = nicotianamine + 3 S-methyl-5'-thioadenosine + 3 H(+). In terms of biological role, synthesizes nicotianamine, a polyamine that is the first intermediate in the synthesis of the phytosiderophores of the mugineic acid type found in gramineae which serve as a sensor for the physiological iron status within the plant, and/or might be involved in the transport of iron. The polypeptide is Nicotianamine synthase 8 (NAS8) (Hordeum vulgare (Barley)).